Reading from the N-terminus, the 457-residue chain is Chromosomal replication initiator protein DnaA (457 aa).

The interval 1–73 (MANNYQTLYD…SKYLSEEFKK (73 aa)) is domain I, interacts with DnaA modulators. A domain II region spans residues 73–108 (KENIVNFEFIIDNEKLLINSNFLIKETNIKNRFNFS). The interval 109-331 (DELLRYNFNN…GNLKQICFWA (223 aa)) is domain III, AAA+ region. ATP contacts are provided by Gly156, Gly158, Lys159, and Thr160. The domain IV, binds dsDNA stretch occupies residues 332 to 457 (DNDTNKDLII…LQINLIINKF (126 aa)).

Belongs to the DnaA family. Oligomerizes as a right-handed, spiral filament on DNA at oriC.

The protein resides in the cytoplasm. Functionally, plays an essential role in the initiation and regulation of chromosomal replication. ATP-DnaA binds to the origin of replication (oriC) to initiate formation of the DNA replication initiation complex once per cell cycle. Binds the DnaA box (a 9 base pair repeat at the origin) and separates the double-stranded (ds)DNA. Forms a right-handed helical filament on oriC DNA; dsDNA binds to the exterior of the filament while single-stranded (ss)DNA is stabiized in the filament's interior. The ATP-DnaA-oriC complex binds and stabilizes one strand of the AT-rich DNA unwinding element (DUE), permitting loading of DNA polymerase. After initiation quickly degrades to an ADP-DnaA complex that is not apt for DNA replication. Binds acidic phospholipids. The polypeptide is Chromosomal replication initiator protein DnaA (Ureaplasma parvum serovar 3 (strain ATCC 700970)).